The chain runs to 495 residues: UDP-N-acetylmuramoyl-L-alanyl-D-glutamate--2,6-diaminopimelate ligase (495 aa).

UDP-N-acetyl-alpha-D-muramoyl-L-alanyl-D-glutamate-binding positions include Leu27, Ser29, and His44–Thr46. Gly116–Thr122 is an ATP binding site. UDP-N-acetyl-alpha-D-muramoyl-L-alanyl-D-glutamate-binding positions include Asn157, Thr158 to Thr159, Ser185, Gln191, and Arg193. Residue Lys225 is modified to N6-carboxylysine. Meso-2,6-diaminopimelate contacts are provided by residues Arg390, Asp414–Arg417, Gly465, and Glu469. The Meso-diaminopimelate recognition motif signature appears at Asp414 to Arg417.

Belongs to the MurCDEF family. MurE subfamily. The cofactor is Mg(2+). In terms of processing, carboxylation is probably crucial for Mg(2+) binding and, consequently, for the gamma-phosphate positioning of ATP.

Its subcellular location is the cytoplasm. It carries out the reaction UDP-N-acetyl-alpha-D-muramoyl-L-alanyl-D-glutamate + meso-2,6-diaminopimelate + ATP = UDP-N-acetyl-alpha-D-muramoyl-L-alanyl-gamma-D-glutamyl-meso-2,6-diaminopimelate + ADP + phosphate + H(+). It participates in cell wall biogenesis; peptidoglycan biosynthesis. Functionally, catalyzes the addition of meso-diaminopimelic acid to the nucleotide precursor UDP-N-acetylmuramoyl-L-alanyl-D-glutamate (UMAG) in the biosynthesis of bacterial cell-wall peptidoglycan. The protein is UDP-N-acetylmuramoyl-L-alanyl-D-glutamate--2,6-diaminopimelate ligase of Photorhabdus laumondii subsp. laumondii (strain DSM 15139 / CIP 105565 / TT01) (Photorhabdus luminescens subsp. laumondii).